A 198-amino-acid polypeptide reads, in one-letter code: Undecaprenyl phosphate transporter A (198 aa).

Transmembrane regions (helical) follow at residues 15–35 (MGYA…EIVL), 47–67 (IGFI…QIFI), 107–127 (VVFS…PAGI), 135–155 (FVVL…YLGI), and 169–189 (GTYT…YFVI).

This sequence belongs to the DedA family.

It is found in the cell membrane. Flippase that catalyzes the transport of undecaprenyl phosphate (UndP) across the cytoplasmic membrane, from the external side to the cytoplasmic side. Is involved in UndP recycling during peptidoglycan synthesis. This Bacillus subtilis (strain 168) protein is Undecaprenyl phosphate transporter A.